A 381-amino-acid chain; its full sequence is MAKRDYYEVLGCDRGADETVLKASFRKLAMKWHPDKNPGDPEAEIRFKEISEAYEVLKDPQKRGAYDRYGHAAFENGGGPGGAGFNADFASTFADIFDDLFGGSMGRSGARSAGGRARGADLRYNMDITLEEAFSGKTAQISIPTSISCEVCSGSGAKAGTQPKTCRTCNGAGKIRHAQGFFTLERTCPSCQGRGTVIEDPCPNCGGAGRVTRERTLQVQIPAGVEDGTRIRLGGEGEAGVRGGPPGDLYIFLSIEPHTFFQREGADLYCRAPISMVTAALGGTVEVPTIGGEKTKVKIPEGTQSGKRLRLPGAGMPVLRSRSFGDMYVQVVVETPQNLTKRQKELLAEFEGLSSTDTHPESNGFFAKMKDFFQGASSDND.

One can recognise a J domain in the interval 5–70 (DYYEVLGCDR…QKRGAYDRYG (66 aa)). The segment at 136–214 (GKTAQISIPT…CGGAGRVTRE (79 aa)) adopts a CR-type zinc-finger fold. Residues cysteine 149, cysteine 152, cysteine 166, cysteine 169, cysteine 188, cysteine 191, cysteine 202, and cysteine 205 each contribute to the Zn(2+) site. 4 CXXCXGXG motif repeats span residues 149-156 (CEVCSGSG), 166-173 (CRTCNGAG), 188-195 (CPSCQGRG), and 202-209 (CPNCGGAG).

Belongs to the DnaJ family. As to quaternary structure, homodimer. The cofactor is Zn(2+).

The protein resides in the cytoplasm. Its function is as follows. Participates actively in the response to hyperosmotic and heat shock by preventing the aggregation of stress-denatured proteins and by disaggregating proteins, also in an autonomous, DnaK-independent fashion. Unfolded proteins bind initially to DnaJ; upon interaction with the DnaJ-bound protein, DnaK hydrolyzes its bound ATP, resulting in the formation of a stable complex. GrpE releases ADP from DnaK; ATP binding to DnaK triggers the release of the substrate protein, thus completing the reaction cycle. Several rounds of ATP-dependent interactions between DnaJ, DnaK and GrpE are required for fully efficient folding. Also involved, together with DnaK and GrpE, in the DNA replication of plasmids through activation of initiation proteins. The protein is Chaperone protein DnaJ of Azorhizobium caulinodans (strain ATCC 43989 / DSM 5975 / JCM 20966 / LMG 6465 / NBRC 14845 / NCIMB 13405 / ORS 571).